A 211-amino-acid chain; its full sequence is dITP/XTP pyrophosphatase (211 aa).

Residue 13–18 (THNPGK) participates in substrate binding. Positions 45 and 74 each coordinate Mg(2+). The active-site Proton acceptor is aspartate 74. Substrate-binding positions include serine 75, 160 to 163 (FGYD), lysine 183, and 195 to 196 (HR).

Belongs to the HAM1 NTPase family. As to quaternary structure, homodimer. The cofactor is Mg(2+).

The catalysed reaction is XTP + H2O = XMP + diphosphate + H(+). The enzyme catalyses dITP + H2O = dIMP + diphosphate + H(+). It catalyses the reaction ITP + H2O = IMP + diphosphate + H(+). Its function is as follows. Pyrophosphatase that catalyzes the hydrolysis of nucleoside triphosphates to their monophosphate derivatives, with a high preference for the non-canonical purine nucleotides XTP (xanthosine triphosphate), dITP (deoxyinosine triphosphate) and ITP. Seems to function as a house-cleaning enzyme that removes non-canonical purine nucleotides from the nucleotide pool, thus preventing their incorporation into DNA/RNA and avoiding chromosomal lesions. This Bradyrhizobium diazoefficiens (strain JCM 10833 / BCRC 13528 / IAM 13628 / NBRC 14792 / USDA 110) protein is dITP/XTP pyrophosphatase.